Reading from the N-terminus, the 122-residue chain is Large ribosomal subunit protein uL18 (122 aa).

This sequence belongs to the universal ribosomal protein uL18 family. Part of the 50S ribosomal subunit; part of the 5S rRNA/L5/L18/L25 subcomplex. Contacts the 5S and 23S rRNAs.

In terms of biological role, this is one of the proteins that bind and probably mediate the attachment of the 5S RNA into the large ribosomal subunit, where it forms part of the central protuberance. This Prochlorococcus marinus (strain MIT 9301) protein is Large ribosomal subunit protein uL18.